The following is a 301-amino-acid chain: MTTKFNVKTFQGMILALQDYWANVGCTIVQPFDMEVGAGTSHPMTALRALGPEPMAFAYVQPSRRPTDGRYGENPNRLQHYYQFQVVIKPSPDNIQELYLGSLKMLGFDPTQHDIRFVEDNWENPTLGAWGLGWEVWLNGMEVTQFTYFQQVGGLECKPVTGEVTYGLERLAMYIQGVDSVYDLVWSDGPLGKTTYGDVFHQNEVEQSTYNFEYADVDFLFKAFEQYEKEATELLALEKPLPLPAYERILKAAHSFNMLDARKAISVTERQRYILRIRTLTKGVAEAYYVSREALGFPGCK.

This sequence belongs to the class-II aminoacyl-tRNA synthetase family. In terms of assembly, tetramer of two alpha and two beta subunits.

It is found in the cytoplasm. It catalyses the reaction tRNA(Gly) + glycine + ATP = glycyl-tRNA(Gly) + AMP + diphosphate. In Actinobacillus pleuropneumoniae serotype 5b (strain L20), this protein is Glycine--tRNA ligase alpha subunit.